A 371-amino-acid chain; its full sequence is Probable palmitoyltransferase ZDHHC11B (371 aa).

The next 2 membrane-spanning stretches (helical) occupy residues 43–63 and 70–90; these read VVTW…FIPL and YIAY…HLIA. A DHHC domain is found at 125-175; sequence QFCHLCKVTVNKKTKHCISCNKCVSGFDHHCKWINNCVGSRNYWFFFSTVA. The active-site S-palmitoyl cysteine intermediate is the C155. The next 3 membrane-spanning stretches (helical) occupy residues 177-197, 216-236, and 239-259; these read ATAG…QYLV, TWLL…VVII, and LVLL…IFHI. Residues 335 to 371 form a disordered region; the sequence is DGDSKAQEADDAPSTSTLGLQQETTEPMKTDSAESED. A compositionally biased stretch (polar residues) spans 347–359; the sequence is PSTSTLGLQQETT. Residues 360-371 are compositionally biased toward basic and acidic residues; sequence EPMKTDSAESED.

The protein belongs to the DHHC palmitoyltransferase family.

The protein resides in the membrane. It carries out the reaction L-cysteinyl-[protein] + hexadecanoyl-CoA = S-hexadecanoyl-L-cysteinyl-[protein] + CoA. Its function is as follows. Probable palmitoyltransferase that could catalyze the addition of palmitate onto various protein substrates and be involved in a variety of cellular processes. May play a role in cell proliferation. The polypeptide is Probable palmitoyltransferase ZDHHC11B (Homo sapiens (Human)).